The primary structure comprises 421 residues: Ribulose bisphosphate carboxylase large chain (421 aa).

Residues asparagine 68 and threonine 118 each coordinate substrate. Catalysis depends on lysine 120, which acts as the Proton acceptor. Position 122 (lysine 122) interacts with substrate. The Mg(2+) site is built by lysine 146, aspartate 148, and glutamate 149. At lysine 146 the chain carries N6-carboxylysine. The active-site Proton acceptor is histidine 239. Arginine 240, histidine 272, and serine 324 together coordinate substrate.

Belongs to the RuBisCO large chain family. Type I subfamily. Heterohexadecamer of 8 large chains and 8 small chains; disulfide-linked. The disulfide link is formed within the large subunit homodimers. Mg(2+) serves as cofactor. Post-translationally, the disulfide bond which can form in the large chain dimeric partners within the hexadecamer appears to be associated with oxidative stress and protein turnover.

It localises to the plastid. The protein resides in the chloroplast. The enzyme catalyses 2 (2R)-3-phosphoglycerate + 2 H(+) = D-ribulose 1,5-bisphosphate + CO2 + H2O. The catalysed reaction is D-ribulose 1,5-bisphosphate + O2 = 2-phosphoglycolate + (2R)-3-phosphoglycerate + 2 H(+). Functionally, ruBisCO catalyzes two reactions: the carboxylation of D-ribulose 1,5-bisphosphate, the primary event in carbon dioxide fixation, as well as the oxidative fragmentation of the pentose substrate in the photorespiration process. Both reactions occur simultaneously and in competition at the same active site. The protein is Ribulose bisphosphate carboxylase large chain (rbcL) of Aegilops crassa (Persian goatgrass).